The following is a 442-amino-acid chain: Probable carboxypeptidase PABG_01461 (442 aa).

The first 20 residues, 1–20 (MKLQYLVALLSVQAVPPVTA), serve as a signal peptide directing secretion. Asn-102 carries an N-linked (GlcNAc...) asparagine glycan. Zn(2+) is bound at residue Asp-160. Residue Glu-192 is the Proton acceptor of the active site. Glu-193 serves as a coordination point for Zn(2+). N-linked (GlcNAc...) asparagine glycosylation occurs at Asn-343.

Belongs to the peptidase M20A family. Zn(2+) is required as a cofactor.

Its subcellular location is the secreted. In Paracoccidioides brasiliensis (strain Pb03), this protein is Probable carboxypeptidase PABG_01461.